Reading from the N-terminus, the 356-residue chain is Outer spore wall protein LDS2 (356 aa).

Topologically, residues 1 to 92 (MSTRPQPDWY…ISESVGNSDY (92 aa)) are cytoplasmic. Residues 93 to 113 (LHLFFLIFGYYLLNLLLIVAF) form a helical membrane-spanning segment. Topologically, residues 114–115 (TS) are extracellular. The chain crosses the membrane as a helical span at residues 116–136 (ILAWSLLVCIYLPFLGLFALP). At 137 to 213 (LAYMQTILIS…KRFYLVSLPQ (77 aa)) the chain is on the cytoplasmic side. Residues 214–234 (FFIFFFWYIFIAFMFLLLLLV) traverse the membrane as a helical segment. Topologically, residues 235-294 (PIVGPITINMLPFSPGMGFYYFEPYFVDVLHLDSRKLSKVYYKGFAKWLLYSISSGLLES) are extracellular. The chain crosses the membrane as a helical span at residues 295–315 (IPILGGLFIGTNAVGASLWIV). Topologically, residues 316–356 (KEIKDRDQPAVPPSPPAEPEEPTVGSYAPPIQQSIAHINPP) are cytoplasmic. The interval 322–356 (DQPAVPPSPPAEPEEPTVGSYAPPIQQSIAHINPP) is disordered. Residues 346-356 (IQQSIAHINPP) are compositionally biased toward polar residues.

This sequence belongs to the LDS family.

The protein resides in the prospore membrane. The protein localises to the lipid droplet. It localises to the spore wall. Involved in spore wall assembly. The sequence is that of Outer spore wall protein LDS2 from Saccharomyces cerevisiae (strain ATCC 204508 / S288c) (Baker's yeast).